The chain runs to 462 residues: Phosphoglucosamine mutase (462 aa).

S111 serves as the catalytic Phosphoserine intermediate. The Mg(2+) site is built by S111, D250, D252, and D254. Position 111 is a phosphoserine (S111).

This sequence belongs to the phosphohexose mutase family. Mg(2+) is required as a cofactor. Post-translationally, activated by phosphorylation.

It catalyses the reaction alpha-D-glucosamine 1-phosphate = D-glucosamine 6-phosphate. In terms of biological role, catalyzes the conversion of glucosamine-6-phosphate to glucosamine-1-phosphate. The chain is Phosphoglucosamine mutase from Synechococcus sp. (strain WH7803).